An 80-amino-acid polypeptide reads, in one-letter code: Metallothionein-like protein 1 (80 aa).

It belongs to the metallothionein superfamily. Type 15 family.

Functionally, metallothioneins have a high content of cysteine residues that bind various heavy metals. The protein is Metallothionein-like protein 1 (METAL1) of Coffea arabica (Arabian coffee).